Consider the following 79-residue polypeptide: Acyl carrier protein (79 aa).

Positions serine 2–lysine 77 constitute a Carrier domain. Serine 37 is modified (O-(pantetheine 4'-phosphoryl)serine).

Belongs to the acyl carrier protein (ACP) family. Post-translationally, 4'-phosphopantetheine is transferred from CoA to a specific serine of apo-ACP by AcpS. This modification is essential for activity because fatty acids are bound in thioester linkage to the sulfhydryl of the prosthetic group.

It is found in the cytoplasm. The protein operates within lipid metabolism; fatty acid biosynthesis. In terms of biological role, carrier of the growing fatty acid chain in fatty acid biosynthesis. The chain is Acyl carrier protein from Gluconobacter oxydans (strain 621H) (Gluconobacter suboxydans).